A 130-amino-acid chain; its full sequence is Methylglyoxal synthase (130 aa).

Positions 1–130 (MMTRPRIALI…AELSRVEAQP (130 aa)) constitute an MGS-like domain. Residues histidine 12, lysine 16, 38–41 (TGTT), and 58–59 (SG) each bind substrate. Aspartate 64 functions as the Proton donor/acceptor in the catalytic mechanism. Histidine 91 lines the substrate pocket.

It belongs to the methylglyoxal synthase family.

The enzyme catalyses dihydroxyacetone phosphate = methylglyoxal + phosphate. Its function is as follows. Catalyzes the formation of methylglyoxal from dihydroxyacetone phosphate. The sequence is that of Methylglyoxal synthase from Cupriavidus pinatubonensis (strain JMP 134 / LMG 1197) (Cupriavidus necator (strain JMP 134)).